The sequence spans 735 residues: 5-methyltetrahydropteroyltriglutamate--homocysteine methyltransferase (735 aa).

Residues 15–18 and K104 contribute to the 5-methyltetrahydropteroyltri-L-glutamate site; that span reads REFK. L-homocysteine-binding positions include 409 to 411 and E462; that span reads IGS. L-methionine-binding positions include 409 to 411 and E462; that span reads IGS. 5-methyltetrahydropteroyltri-L-glutamate is bound by residues 493–494 and W539; that span reads RC. An L-homocysteine-binding site is contributed by D577. An L-methionine-binding site is contributed by D577. E583 is a binding site for 5-methyltetrahydropteroyltri-L-glutamate. Positions 618, 620, and 642 each coordinate Zn(2+). H672 functions as the Proton donor in the catalytic mechanism. C704 contacts Zn(2+).

It belongs to the vitamin-B12 independent methionine synthase family. Zn(2+) is required as a cofactor.

The enzyme catalyses 5-methyltetrahydropteroyltri-L-glutamate + L-homocysteine = tetrahydropteroyltri-L-glutamate + L-methionine. The protein operates within amino-acid biosynthesis; L-methionine biosynthesis via de novo pathway; L-methionine from L-homocysteine (MetE route): step 1/1. Catalyzes the transfer of a methyl group from 5-methyltetrahydrofolate to homocysteine resulting in methionine formation. The chain is 5-methyltetrahydropteroyltriglutamate--homocysteine methyltransferase from Thermotoga petrophila (strain ATCC BAA-488 / DSM 13995 / JCM 10881 / RKU-1).